The sequence spans 231 residues: Enolase-phosphatase E1 (231 aa).

2 residues coordinate Mg(2+): D11 and E13. Residues 125 to 126 and K162 contribute to the substrate site; that span reads SS. Residue D188 coordinates Mg(2+).

The protein belongs to the HAD-like hydrolase superfamily. MasA/MtnC family. Monomer. Mg(2+) is required as a cofactor.

The protein localises to the cytoplasm. It localises to the nucleus. The enzyme catalyses 5-methylsulfanyl-2,3-dioxopentyl phosphate + H2O = 1,2-dihydroxy-5-(methylsulfanyl)pent-1-en-3-one + phosphate. It participates in amino-acid biosynthesis; L-methionine biosynthesis via salvage pathway; L-methionine from S-methyl-5-thio-alpha-D-ribose 1-phosphate: step 3/6. Its pathway is amino-acid biosynthesis; L-methionine biosynthesis via salvage pathway; L-methionine from S-methyl-5-thio-alpha-D-ribose 1-phosphate: step 4/6. Its function is as follows. Bifunctional enzyme that catalyzes the enolization of 2,3-diketo-5-methylthiopentyl-1-phosphate (DK-MTP-1-P) into the intermediate 2-hydroxy-3-keto-5-methylthiopentenyl-1-phosphate (HK-MTPenyl-1-P), which is then dephosphorylated to form the acireductone 1,2-dihydroxy-3-keto-5-methylthiopentene (DHK-MTPene). This Pyricularia oryzae (strain 70-15 / ATCC MYA-4617 / FGSC 8958) (Rice blast fungus) protein is Enolase-phosphatase E1.